The primary structure comprises 323 residues: 8-oxo-dGDP phosphatase NUDT18 (323 aa).

In terms of domain architecture, Nudix hydrolase spans 37-167 (RLRKNVCYVV…DVLHLVELGA (131 aa)). Residue leucine 58 coordinates Mg(2+). A Nudix box motif is present at residues 76–97 (GRMEPGETIVEAMQREVKEEAG).

This sequence belongs to the Nudix hydrolase family. Requires Mn(2+) as cofactor. Mg(2+) is required as a cofactor.

It carries out the reaction 8-oxo-dGDP + H2O = 8-oxo-dGMP + phosphate + H(+). The catalysed reaction is 8-oxo-dADP + H2O = 8-oxo-dAMP + phosphate + H(+). The enzyme catalyses 2-oxo-dADP + H2O = 2-oxo-dAMP + phosphate + H(+). It catalyses the reaction 8-oxo-GDP + H2O = 8-oxo-GMP + phosphate + H(+). Its function is as follows. Mediates the hydrolysis of oxidized nucleoside diphosphate derivatives. Hydrolyzes 8-oxo-7,8-dihydroguanine (8-oxo-Gua)-containing deoxyribo- and ribonucleoside diphosphates to the monophosphates. Hydrolyzes 8-oxo-dGDP and 8-oxo-GDP with the same efficiencies. Also hydrolyzes 8-OH-dADP and 2-OH-dADP. Exhibited no or minimal hydrolysis activity against 8-oxo-dGTP, 8-oxo-GTP, dGTP, GTP, dGDP and GDP. Probably removes oxidized guanine nucleotides from both the DNA and RNA precursor pools. The polypeptide is 8-oxo-dGDP phosphatase NUDT18 (Mus musculus (Mouse)).